A 356-amino-acid chain; its full sequence is Methionine import ATP-binding protein MetN 1 (356 aa).

In terms of domain architecture, ABC transporter spans 2 to 241 (IELKNISVTF…PQQPLTKDFI (240 aa)). Position 38–45 (38–45 (GYSGAGKS)) interacts with ATP.

Belongs to the ABC transporter superfamily. Methionine importer (TC 3.A.1.24) family. The complex is composed of two ATP-binding proteins (MetN), two transmembrane proteins (MetI) and a solute-binding protein (MetQ).

It localises to the cell membrane. It carries out the reaction L-methionine(out) + ATP + H2O = L-methionine(in) + ADP + phosphate + H(+). It catalyses the reaction D-methionine(out) + ATP + H2O = D-methionine(in) + ADP + phosphate + H(+). In terms of biological role, part of the ABC transporter complex MetNIQ involved in methionine import. Responsible for energy coupling to the transport system. This is Methionine import ATP-binding protein MetN 1 from Enterococcus faecalis (strain ATCC 700802 / V583).